Reading from the N-terminus, the 292-residue chain is Protease HtpX (292 aa).

2 consecutive transmembrane segments (helical) span residues Ile-5–Leu-25 and Ser-34–Leu-54. Zn(2+) is bound at residue His-140. Residue Glu-141 is part of the active site. Residue His-144 participates in Zn(2+) binding. Transmembrane regions (helical) follow at residues Leu-155–Ile-175 and Ile-193–Phe-213. Glu-218 contacts Zn(2+).

Belongs to the peptidase M48B family. The cofactor is Zn(2+).

It localises to the cell inner membrane. The sequence is that of Protease HtpX from Xanthomonas euvesicatoria pv. vesicatoria (strain 85-10) (Xanthomonas campestris pv. vesicatoria).